A 274-amino-acid polypeptide reads, in one-letter code: Small ribosomal subunit protein uS2 (274 aa).

It belongs to the universal ribosomal protein uS2 family.

The sequence is that of Small ribosomal subunit protein uS2 from Syntrophobacter fumaroxidans (strain DSM 10017 / MPOB).